A 100-amino-acid chain; its full sequence is Urease subunit gamma (100 aa).

This sequence belongs to the urease gamma subunit family. Heterotrimer of UreA (gamma), UreB (beta) and UreC (alpha) subunits. Three heterotrimers associate to form the active enzyme.

It localises to the cytoplasm. It catalyses the reaction urea + 2 H2O + H(+) = hydrogencarbonate + 2 NH4(+). It participates in nitrogen metabolism; urea degradation; CO(2) and NH(3) from urea (urease route): step 1/1. The protein is Urease subunit gamma of Haemophilus influenzae (strain 86-028NP).